The primary structure comprises 428 residues: Serine--tRNA ligase (428 aa).

235-237 (TAE) contacts L-serine. 266–268 (RSE) provides a ligand contact to ATP. L-serine is bound at residue E289. 353–356 (EISS) contacts ATP. S389 provides a ligand contact to L-serine.

The protein belongs to the class-II aminoacyl-tRNA synthetase family. Type-1 seryl-tRNA synthetase subfamily. Homodimer. The tRNA molecule binds across the dimer.

Its subcellular location is the cytoplasm. It carries out the reaction tRNA(Ser) + L-serine + ATP = L-seryl-tRNA(Ser) + AMP + diphosphate + H(+). The enzyme catalyses tRNA(Sec) + L-serine + ATP = L-seryl-tRNA(Sec) + AMP + diphosphate + H(+). It participates in aminoacyl-tRNA biosynthesis; selenocysteinyl-tRNA(Sec) biosynthesis; L-seryl-tRNA(Sec) from L-serine and tRNA(Sec): step 1/1. Catalyzes the attachment of serine to tRNA(Ser). Is also able to aminoacylate tRNA(Sec) with serine, to form the misacylated tRNA L-seryl-tRNA(Sec), which will be further converted into selenocysteinyl-tRNA(Sec). In Shewanella amazonensis (strain ATCC BAA-1098 / SB2B), this protein is Serine--tRNA ligase.